The chain runs to 33 residues: Pardaxin P-3 (33 aa).

This sequence belongs to the pardaxin family. In aqueous solution exists as a tetramer.

It localises to the secreted. The protein localises to the target cell membrane. Functionally, exhibits unusual shark repellent and surfactant properties. Forms voltage-dependent, ion-permeable channels in membranes. At high concentration causes cell membrane lysis. The polypeptide is Pardaxin P-3 (Pardachirus pavoninus (Peacock sole)).